The sequence spans 142 residues: Large ribosomal subunit protein uL11 (142 aa).

This sequence belongs to the universal ribosomal protein uL11 family. In terms of assembly, part of the ribosomal stalk of the 50S ribosomal subunit. Interacts with L10 and the large rRNA to form the base of the stalk. L10 forms an elongated spine to which L12 dimers bind in a sequential fashion forming a multimeric L10(L12)X complex. Post-translationally, one or more lysine residues are methylated.

In terms of biological role, forms part of the ribosomal stalk which helps the ribosome interact with GTP-bound translation factors. This is Large ribosomal subunit protein uL11 from Shigella boydii serotype 4 (strain Sb227).